We begin with the raw amino-acid sequence, 139 residues long: Cystatin-1 (139 aa).

Positions 1–22 (MHSRLPVPASLCLLLLLPSVLP) are cleaved as a signal peptide. In terms of domain architecture, Cystatin spans 27-127 (GGLSPRDVTD…CHFEVWSRPW (101 aa)). Residues 71–75 (QVVSG) carry the Secondary area of contact motif. 2 disulfides stabilise this stretch: Cys89–Cys105 and Cys118–Cys138.

The protein belongs to the cystatin family. As to expression, expressed by the venom gland.

Its subcellular location is the secreted. Its function is as follows. Inhibits various C1 cysteine proteases including cathepsin L, papain and cathepsin B. This protein has no toxic activity and its function in the venom is unknown. It may play a role as housekeeping or regulatory protein. In Crotalus adamanteus (Eastern diamondback rattlesnake), this protein is Cystatin-1.